Reading from the N-terminus, the 105-residue chain is Thioredoxin (105 aa).

Positions 1–105 (MASNVTDKSF…SLIEWINNNI (105 aa)) constitute a Thioredoxin domain. A disulfide bridge links C30 with C33.

Belongs to the thioredoxin family.

Its function is as follows. Component of the thioredoxin-thioredoxin reductase system. Participates in various redox reactions through the reversible oxidation of its active center dithiol to a disulfide and catalyzes dithiol-disulfide exchange reactions. The chain is Thioredoxin (trxA) from Rickettsia bellii (strain RML369-C).